A 262-amino-acid polypeptide reads, in one-letter code: Apolipoprotein A-I-2 (262 aa).

The N-terminal stretch at 1–18 is a signal peptide; the sequence is MQFLALALTILLAAATQA. The 3 X approximate tandem repeats stretch occupies residues 32–63; it reads VKVAMMEYMAQVKETAQRSIDHLDDTEYKEYK. Repeat copies occupy residues 64-85 and 87-107. Residues 64–262 form a 10 X approximate tandem repeats region; it reads VQLSQSLDNL…YETISQAMKA (199 aa). A 3; half-length repeat occupies 108 to 118; sequence KDVEELRSQLE. 5 tandem repeats follow at residues 119–140, 141–162, 163–184, 185–206, and 207–228. The stretch at 229 to 239 is one 9; half-length repeat; that stretch reads PLTTDFKGQLG. Residues 240 to 262 form repeat 10; the sequence is PAAEQAKEKLMALYETISQAMKA.

The protein belongs to the apolipoprotein A1/A4/E family.

It localises to the secreted. Participates in the reverse transport of cholesterol from tissues to the liver for excretion by promoting cholesterol efflux from tissues and by acting as a cofactor for the lecithin cholesterol acyltransferase (LCAT). This is Apolipoprotein A-I-2 from Oncorhynchus mykiss (Rainbow trout).